The following is a 304-amino-acid chain: Nod factor export ATP-binding protein I (304 aa).

One can recognise an ABC transporter domain in the interval 6 to 236 (IDFQQVEKRY…EIGCDVIEIY (231 aa)). 38–45 (GPNGAGKT) lines the ATP pocket.

Belongs to the ABC transporter superfamily. Lipooligosaccharide exporter (TC 3.A.1.102) family. The complex is composed of two ATP-binding proteins (NodI) and two transmembrane proteins (NodJ).

The protein resides in the cell inner membrane. Functionally, part of the ABC transporter complex NodIJ involved in the export of the nodulation factors (Nod factors), the bacterial signal molecules that induce symbiosis and subsequent nodulation induction. Nod factors are LCO (lipo-chitin oligosaccharide), a modified beta-1,4-linked N-acetylglucosamine oligosaccharide. This subunit is responsible for energy coupling to the transport system. The chain is Nod factor export ATP-binding protein I from Burkholderia pseudomallei (strain K96243).